Here is a 361-residue protein sequence, read N- to C-terminus: Spermidine/putrescine import ATP-binding protein PotA (361 aa).

The ABC transporter domain maps to 7-241; the sequence is IEVRNVSKRY…PQHRFVAQFI (235 aa). 43–50 is an ATP binding site; that stretch reads GPSGCGKT.

It belongs to the ABC transporter superfamily. Spermidine/putrescine importer (TC 3.A.1.11.1) family. In terms of assembly, the complex is composed of two ATP-binding proteins (PotA), two transmembrane proteins (PotB and PotC) and a solute-binding protein (PotD).

It localises to the cell inner membrane. It catalyses the reaction ATP + H2O + polyamine-[polyamine-binding protein]Side 1 = ADP + phosphate + polyamineSide 2 + [polyamine-binding protein]Side 1.. Its function is as follows. Part of the ABC transporter complex PotABCD involved in spermidine/putrescine import. Responsible for energy coupling to the transport system. This is Spermidine/putrescine import ATP-binding protein PotA from Pseudomonas fluorescens (strain Pf0-1).